The chain runs to 297 residues: Urease accessory protein UreD (297 aa).

It belongs to the UreD family. UreD, UreF and UreG form a complex that acts as a GTP-hydrolysis-dependent molecular chaperone, activating the urease apoprotein by helping to assemble the nickel containing metallocenter of UreC. The UreE protein probably delivers the nickel.

It localises to the cytoplasm. Its function is as follows. Required for maturation of urease via the functional incorporation of the urease nickel metallocenter. This is Urease accessory protein UreD from Prochlorococcus marinus subsp. pastoris (strain CCMP1986 / NIES-2087 / MED4).